Consider the following 628-residue polypeptide: MEPKYINTQSFVDSSFFVKLSQLKLDVLKLDQSSRPIHGYYNYKRLAPGQAPAINLNDISFASGQELESQLPARSAFIVSGEITNVNTLEEFKSQSKLEFLTRAGGKIIDSIKNKAALQDPSLLAHFAVFSFADLKKYKFYYWFAFPTLHSEWHITSEGPLGGDAPDSQFSLIRDGKPVPLAQLNAVPTHSPLHVAFVDTSAVPDAYSYVLRNFLTMLAIYGYRDVVVDVHRDNQSSSRQIALKLQSAVDSPKISGWERTSQGKLGPKLADLGALIDPSQLADQAIDLNLKLMKWRIVPTLDLDRIKATKCLLLGSGTLGSYVGRALLAWGVRKITFVDNGKVSFSNPVRQPLFNFIDCLDGGSPKAETAAENMKRIFPLVDAQGFTLEVPMAGHPITDETKQKLDFDRLGELVQNHDVIFLLMDSRETRWLPTVMGNVNNKLVINAALGFESYLVMRHGCINPEKLPEEQQESRLGCYFCNDVYAPSDSTTDRTLDQMCTVTRPGVALMAASLAVELMVSVLQHPDRQYAPHSAQDSCTVLGSLPHQLRGFLHNFEMLKLSAKNFRYCSACSVSVVQEFKSRGWEFVKQALENPKYLEQLTGLTQVHQQAEEAELNFDISDSEGEFD.

The short motif at 315–320 (GSGTLG) is the GXGXXG motif element. Catalysis depends on C500, which acts as the Glycyl thioester intermediate.

The protein belongs to the ATG7 family. Homodimer.

It localises to the cytoplasm. It is found in the preautophagosomal structure. In terms of biological role, E1-like activating enzyme involved in the 2 ubiquitin-like systems required for cytoplasm to vacuole transport (Cvt) and autophagy. Activates ATG12 for its conjugation with ATG5 and ATG8 for its conjugation with phosphatidylethanolamine. Both systems are needed for the ATG8 association to Cvt vesicles and autophagosomes membranes. Autophagy is essential for maintenance of amino acid levels and protein synthesis under nitrogen starvation. Required for selective autophagic degradation of the nucleus (nucleophagy) as well as for mitophagy which contributes to regulate mitochondrial quantity and quality by eliminating the mitochondria to a basal level to fulfill cellular energy requirements and preventing excess ROS production. Plays a role in the regulation of filamentous growth and chronological longevity. The sequence is that of Ubiquitin-like modifier-activating enzyme ATG7 (ATG7) from Pichia angusta (Yeast).